Here is a 257-residue protein sequence, read N- to C-terminus: MTYLDRILEHKQIEVAALKKEQPRQRYEELQAELEAPRNFSASLKRPANKGVRLIAEIKKASPSRGLIVQDFDPLAMAQRYQELGAAAFSVLTDQQFFQGSNDYLRQVKGAFKLPVLRKDFIVDALQIFEARLLGADAILLIVAALESSQLRDYLQLSAELGLSALVEVHDGAELDEALQQGATILGVNNRNLKDFSVDINTSIKLRPSIPSDMIAVAESGLKRAADIDAVNAAGFDAVLIGEGLHISTELRSLIWT.

This sequence belongs to the TrpC family.

It catalyses the reaction 1-(2-carboxyphenylamino)-1-deoxy-D-ribulose 5-phosphate + H(+) = (1S,2R)-1-C-(indol-3-yl)glycerol 3-phosphate + CO2 + H2O. It functions in the pathway amino-acid biosynthesis; L-tryptophan biosynthesis; L-tryptophan from chorismate: step 4/5. This is Indole-3-glycerol phosphate synthase from Chlorobium chlorochromatii (strain CaD3).